The sequence spans 388 residues: Succinate--CoA ligase [ADP-forming] subunit beta (388 aa).

The ATP-grasp domain maps to 9-244; sequence KQLFAEYGLP…PSQDDPREAH (236 aa). ATP is bound by residues lysine 46, 53-55, glutamate 99, threonine 102, and glutamate 107; that span reads GRG. 2 residues coordinate Mg(2+): asparagine 199 and aspartate 213. Substrate contacts are provided by residues asparagine 264 and 321–323; that span reads GIV.

The protein belongs to the succinate/malate CoA ligase beta subunit family. As to quaternary structure, heterotetramer of two alpha and two beta subunits. The cofactor is Mg(2+).

It carries out the reaction succinate + ATP + CoA = succinyl-CoA + ADP + phosphate. It catalyses the reaction GTP + succinate + CoA = succinyl-CoA + GDP + phosphate. It functions in the pathway carbohydrate metabolism; tricarboxylic acid cycle; succinate from succinyl-CoA (ligase route): step 1/1. Succinyl-CoA synthetase functions in the citric acid cycle (TCA), coupling the hydrolysis of succinyl-CoA to the synthesis of either ATP or GTP and thus represents the only step of substrate-level phosphorylation in the TCA. The beta subunit provides nucleotide specificity of the enzyme and binds the substrate succinate, while the binding sites for coenzyme A and phosphate are found in the alpha subunit. The protein is Succinate--CoA ligase [ADP-forming] subunit beta of Pseudomonas putida (strain GB-1).